Consider the following 732-residue polypeptide: Outer envelope protein 80, chloroplastic (732 aa).

Disordered regions lie at residues 1 to 23 and 135 to 154; these read MHCH…PSPK and ESTQ…GHSV. A compositionally biased stretch (low complexity) spans 11–20; it reads SSSSIRIHSP. In terms of domain architecture, POTRA spans 314-396; that stretch reads AEVNNISIRF…VDLIMNCVER (83 aa).

This sequence belongs to the OEP80 (TC 1.B.33.2) family.

It is found in the plastid. Its subcellular location is the chloroplast outer membrane. Functionally, plays an essential role during early stages of plastid development. This Arabidopsis thaliana (Mouse-ear cress) protein is Outer envelope protein 80, chloroplastic (OEP80).